The following is a 355-amino-acid chain: S-adenosylmethionine:tRNA ribosyltransferase-isomerase (355 aa).

It belongs to the QueA family. In terms of assembly, monomer.

The protein localises to the cytoplasm. The enzyme catalyses 7-aminomethyl-7-carbaguanosine(34) in tRNA + S-adenosyl-L-methionine = epoxyqueuosine(34) in tRNA + adenine + L-methionine + 2 H(+). Its pathway is tRNA modification; tRNA-queuosine biosynthesis. Its function is as follows. Transfers and isomerizes the ribose moiety from AdoMet to the 7-aminomethyl group of 7-deazaguanine (preQ1-tRNA) to give epoxyqueuosine (oQ-tRNA). In Burkholderia cenocepacia (strain ATCC BAA-245 / DSM 16553 / LMG 16656 / NCTC 13227 / J2315 / CF5610) (Burkholderia cepacia (strain J2315)), this protein is S-adenosylmethionine:tRNA ribosyltransferase-isomerase.